A 365-amino-acid polypeptide reads, in one-letter code: U-box domain-containing protein 56 (365 aa).

Residues 176-281 (YEEQRRRLEI…ELLRALEKGE (106 aa)) are a coiled coil. Positions 293 to 365 (EPPQCFICPI…AIKDWLQQHP (73 aa)) constitute a U-box domain.

It carries out the reaction S-ubiquitinyl-[E2 ubiquitin-conjugating enzyme]-L-cysteine + [acceptor protein]-L-lysine = [E2 ubiquitin-conjugating enzyme]-L-cysteine + N(6)-ubiquitinyl-[acceptor protein]-L-lysine.. Its pathway is protein modification; protein ubiquitination. Its function is as follows. Functions as an E3 ubiquitin ligase. This Arabidopsis thaliana (Mouse-ear cress) protein is U-box domain-containing protein 56 (PUB56).